Reading from the N-terminus, the 161-residue chain is MKCTRETAMVKSLLLLMLGLAILREVAARKNPKAGVPALQKAGNCPPLEDNTVRVDIRIFNQNQGISVPREFQNRSSSPWDYNITRDPHRFPSEIAEAQCRHSGCINAQGQEDSTMNSVAIQQEILVLRREPQGCSNSFRLEKMLLKVGCTCVKPIVHQAA.

Positions 1-28 (MKCTRETAMVKSLLLLMLGLAILREVAA) are cleaved as a signal peptide. Asn83 carries N-linked (GlcNAc...) asparagine glycosylation. 2 cysteine pairs are disulfide-bonded: Cys100-Cys150 and Cys105-Cys152.

Belongs to the IL-17 family. Homodimer; disulfide-linked. Heterodimer with IL17A (IL17A-IL17F). Forms complexes with IL17RA and IL17RC receptors with 2:1 binding stoichiometry: two receptor chains for one interleukin molecule. IL17F homodimer forms predominantly complexes with IL17RC homodimer, whereas IL17A-IL17F favors complexes with IL17RA-IL17RC. IL17RA and IL17RC chains cannot distinguish between IL17A and IL17F molecules, potentially enabling the formation of topologically distinct complexes. Expressed by T-helper 17 cells (Th17) (at protein level). The expression pattern reflects the differentiation state. In fully differentiated Th17 cells, IL17A-IL17F heterodimers are produced at higher levels than IL17A-IL17A and IL17F-IL17F dimers. Dominantly secreted in intestine. Expressed by resident cells of the lamina propria, both epithelial cells and immune cell subsets including natural killer cells, dendritic cells, macrophages and various T and B cell subsets. Expressed by epithelial cells and innate immune cells in the colon. Expressed in group 3 innate lymphoid cells.

It localises to the secreted. Functionally, effector cytokine of innate and adaptive immune system involved in antimicrobial host defense and maintenance of tissue integrity. IL17A-IL17F signals via IL17RA-IL17RC heterodimeric receptor complex, triggering homotypic interaction of IL17RA and IL17RC chains with TRAF3IP2 adapter through SEFIR domains. This leads to downstream TRAF6-mediated activation of NF-kappa-B and MAPkinase pathways ultimately resulting in transcriptional activation of cytokines, chemokines, antimicrobial peptides and matrix metalloproteinases, with potential strong immune inflammation. IL17A-IL17F is primarily involved in host defense against extracellular bacteria and fungi by inducing neutrophilic inflammation. As signature effector cytokine of T-helper 17 cells (Th17), primarily induces neutrophil activation and recruitment at infection and inflammatory sites. Stimulates the production of antimicrobial beta-defensins DEFB1, DEFB103A, and DEFB104A by mucosal epithelial cells, limiting the entry of microbes through the epithelial barriers. IL17F homodimer can signal via IL17RC homodimeric receptor complex, triggering downstream activation of TRAF6 and NF-kappa-B signaling pathway. Via IL17RC induces transcriptional activation of IL33, a potent cytokine that stimulates group 2 innate lymphoid cells and adaptive T-helper 2 cells involved in pulmonary allergic response to fungi. Likely via IL17RC, promotes sympathetic innervation of peripheral organs by coordinating the communication between gamma-delta T cells and parenchymal cells. Stimulates sympathetic innervation of thermogenic adipose tissue by driving TGFB1 expression. Regulates the composition of intestinal microbiota and immune tolerance by inducing antimicrobial proteins that specifically control the growth of commensal Firmicutes and Bacteroidetes. The protein is Interleukin-17F (Il17f) of Mus musculus (Mouse).